The sequence spans 330 residues: Putative glycosyltransferase HI_0258 (330 aa).

A compositionally biased stretch (basic and acidic residues) spans 1 to 31 (MTDRQTDRQTDRQTDRQTDRQTDRQTDRQTD). A disordered region spans residues 1-32 (MTDRQTDRQTDRQTDRQTDRQTDRQTDRQTDG). Residues 44–49 (SSDHYY) and 140–141 (DV) each bind UDP. Mn(2+) is bound by residues Asp140, Asp142, and His270. 270–276 (HYCGPNK) serves as a coordination point for UDP.

This sequence belongs to the glycosyltransferase 8 family.

This is Putative glycosyltransferase HI_0258 from Haemophilus influenzae (strain ATCC 51907 / DSM 11121 / KW20 / Rd).